We begin with the raw amino-acid sequence, 138 residues long: Endonuclease V (138 aa).

The active-site Nucleophile; via amide nitrogen is the T2. E23 acts as the Proton acceptor in catalysis.

In terms of assembly, monomer.

The catalysed reaction is Cleaves the N-glycosidic bond between the 5'-pyrimidine residue in cyclobutadipyrimidine (in DNA) and the corresponding deoxy-D-ribose residue.. It carries out the reaction 2'-deoxyribonucleotide-(2'-deoxyribose 5'-phosphate)-2'-deoxyribonucleotide-DNA = a 3'-end 2'-deoxyribonucleotide-(2,3-dehydro-2,3-deoxyribose 5'-phosphate)-DNA + a 5'-end 5'-phospho-2'-deoxyribonucleoside-DNA + H(+). Its function is as follows. Participates in the repair of UV-damaged DNA by excising pyrimidine dimers that are the major UV-lesions. DNA glycosylase activity hydrolyzes the glycosylic bond of the 5' pyrimidine of the dimer. This leaves apurinic/apyrimidic (AP) sites in the DNA. These AP sites are removed by the AP lyase activity which cleaves the intrapyrimidine phosphodiester bond. Catalysis proceeds via a protonated imine covalent intermediate between the alpha-amino group of the N-terminal threonine residue and the C1' of the deoxyribose sugar of the 5' pyrimidine at the dimer site. This chain is Endonuclease V, found in Enterobacteria phage T4 (Bacteriophage T4).